The primary structure comprises 254 residues: Alcohol dehydrogenase (254 aa).

Residue 10–33 participates in NAD(+) binding; sequence FVAGLGGIGLDTSKGIVKAGPKNL. Residue Ser-138 participates in substrate binding. The active-site Proton acceptor is the Tyr-151.

The protein belongs to the short-chain dehydrogenases/reductases (SDR) family. In terms of assembly, homodimer.

It catalyses the reaction a primary alcohol + NAD(+) = an aldehyde + NADH + H(+). The catalysed reaction is a secondary alcohol + NAD(+) = a ketone + NADH + H(+). The protein is Alcohol dehydrogenase (Adh) of Drosophila immigrans (Fruit fly).